A 1061-amino-acid chain; its full sequence is DNA primase TraC (1061 aa).

In terms of domain architecture, Toprim spans 850 to 938; that stretch reads PALVIGEGYA…GKAIFPIFAP (89 aa). A disordered region spans residues 1034-1061; it reads EGQRQKVQQLKQQDIEQQEQRQRRARTY.

In terms of biological role, required for autonomous replication in E.coli. Transferred into the recipient cell during bacterial conjugation. Catalyzes the synthesis of short oligoribonucleotide primers with CpA or pCpA at their 5'-termini on a single-stranded template DNA. The chain is DNA primase TraC (traC) from Escherichia coli.